Consider the following 364-residue polypeptide: FMNH(2)-dependent dimethylsulfone monooxygenase (364 aa).

The protein belongs to the SsuD family.

It catalyses the reaction dimethyl sulfone + FMNH2 + O2 = methanesulfinate + FMN + formaldehyde + H2O + 2 H(+). Its function is as follows. Involved in the dimethyl sulfide degradation pathway. Catalyzes the oxidation of dimethylsulfone (DMSO2) to yield methanesulfinate, which is oxidized spontaneously to methanesulfonate in the presence of dioxygen and FMNH(2). In Pseudomonas fluorescens (strain Pf0-1), this protein is FMNH(2)-dependent dimethylsulfone monooxygenase.